The following is a 239-amino-acid chain: Pimeloyl-[acyl-carrier protein] methyl ester esterase (239 aa).

Residues tryptophan 20, serine 77–methionine 78, and phenylalanine 138–glutamine 142 each bind substrate. Serine 77 serves as the catalytic Nucleophile. Active-site residues include aspartate 192 and histidine 220. Histidine 220 provides a ligand contact to substrate.

This sequence belongs to the AB hydrolase superfamily. Carboxylesterase BioH family. As to quaternary structure, monomer.

It localises to the cytoplasm. The catalysed reaction is 6-carboxyhexanoyl-[ACP] methyl ester + H2O = 6-carboxyhexanoyl-[ACP] + methanol + H(+). The protein operates within cofactor biosynthesis; biotin biosynthesis. In terms of biological role, the physiological role of BioH is to remove the methyl group introduced by BioC when the pimeloyl moiety is complete. It allows to synthesize pimeloyl-ACP via the fatty acid synthetic pathway through the hydrolysis of the ester bonds of pimeloyl-ACP esters. The sequence is that of Pimeloyl-[acyl-carrier protein] methyl ester esterase from Legionella pneumophila (strain Paris).